Here is a 911-residue protein sequence, read N- to C-terminus: Nitrate reductase [NADH] (911 aa).

A compositionally biased stretch (polar residues) spans 1-10 (MAASVENRQY). Residues 1–71 (MAASVENRQY…SEDEDDDDEK (71 aa)) are disordered. Over residues 61 to 71 (SSEDEDDDDEK) the composition is skewed to acidic residues. Cysteine 188 serves as a coordination point for Mo-molybdopterin. Positions 536 to 611 (SKMYSMSEVR…LEDFRIGELI (76 aa)) constitute a Cytochrome b5 heme-binding domain. Heme contacts are provided by histidine 571 and histidine 594. The FAD-binding FR-type domain maps to 654-766 (REKIPCKLVD…KGPLGHIEYQ (113 aa)). FAD is bound by residues 706–709 (RAYT), 723–727 (VVKIY), phenylalanine 728, phenylalanine 735, 740–742 (QMS), and threonine 793.

Belongs to the nitrate reductase family. In terms of assembly, homodimer. Requires FAD as cofactor. Heme serves as cofactor. It depends on Mo-molybdopterin as a cofactor.

The enzyme catalyses nitrite + NAD(+) + H2O = nitrate + NADH + H(+). In terms of biological role, nitrate reductase is a key enzyme involved in the first step of nitrate assimilation in plants, fungi and bacteria. This chain is Nitrate reductase [NADH] (NIA), found in Solanum lycopersicum (Tomato).